The chain runs to 481 residues: MTDLSAFWPQCLARFEAELSAQQFNTWIKPLVCVAGEDAIALYAANRFSLGFVKERFLSRIETFAEDILGRPVTIELRIGGAQAGASAPAAASPRSPGRPAPAPVAATPTTGSLADSIVSDVPLPNVKLTAPKPAIGGGHESTRLNPAFTFESLVTGKGNQLARAAALQIADNPGDSTYNPFFVYGGVGLGKTHLIQAIGNHVYQKNPQAKIRYIHAERYVADIMRAYQHKAFDEFKRYYHSLDLLLIDDIQFFAGKNRTMEEFFYAFNALLEGGKQVIMTCDSYPKQIEGMDERLISRFSWGLTVEIQPPELEMRVAILMKKAEADNLKLGNDVAFFIAQNVRSNVRELEGALKRVVAYSRFSNQPISLDLVKEALKDILAAGNRQISVDNIQKTVADYYKIKLSDMHSKKRSRDIARPRQVAMALAKELTSMSLPNIGDAFGGRDHTTVLHACKTIAEMRESDPDISRDYAALQQMLRN.

Positions 1–71 (MTDLSAFWPQ…ETFAEDILGR (71 aa)) are domain I, interacts with DnaA modulators. Residues 71-143 (RPVTIELRIG…PAIGGGHEST (73 aa)) are domain II. A compositionally biased stretch (low complexity) spans 86-96 (ASAPAAASPRS). Residues 86-110 (ASAPAAASPRSPGRPAPAPVAATPT) are disordered. The segment at 144–361 (RLNPAFTFES…GALKRVVAYS (218 aa)) is domain III, AAA+ region. Gly-189, Gly-191, Lys-192, and Thr-193 together coordinate ATP. Residues 362 to 481 (RFSNQPISLD…YAALQQMLRN (120 aa)) form a domain IV, binds dsDNA region.

This sequence belongs to the DnaA family. Oligomerizes as a right-handed, spiral filament on DNA at oriC.

The protein resides in the cytoplasm. Functionally, plays an essential role in the initiation and regulation of chromosomal replication. ATP-DnaA binds to the origin of replication (oriC) to initiate formation of the DNA replication initiation complex once per cell cycle. Binds the DnaA box (a 9 base pair repeat at the origin) and separates the double-stranded (ds)DNA. Forms a right-handed helical filament on oriC DNA; dsDNA binds to the exterior of the filament while single-stranded (ss)DNA is stabiized in the filament's interior. The ATP-DnaA-oriC complex binds and stabilizes one strand of the AT-rich DNA unwinding element (DUE), permitting loading of DNA polymerase. After initiation quickly degrades to an ADP-DnaA complex that is not apt for DNA replication. Binds acidic phospholipids. The sequence is that of Chromosomal replication initiator protein DnaA from Laribacter hongkongensis (strain HLHK9).